A 149-amino-acid polypeptide reads, in one-letter code: Arginine regulator (149 aa).

This sequence belongs to the ArgR family.

It localises to the cytoplasm. It participates in amino-acid degradation; L-arginine degradation via ADI pathway. Its function is as follows. Regulates the transcription of the arc operon, involved in arginine catabolism. The sequence is that of Arginine regulator (argR1) from Bacillus thuringiensis subsp. konkukian (strain 97-27).